Reading from the N-terminus, the 669-residue chain is DNA ligase (669 aa).

Residues 32 to 36 (DAEYD), 81 to 82 (SL), and E113 each bind NAD(+). The active-site N6-AMP-lysine intermediate is the K115. Positions 136, 173, 290, and 314 each coordinate NAD(+). C408, C411, C426, and C432 together coordinate Zn(2+). The BRCT domain maps to 592–669 (AVDSALAGKI…DEQALIEFLK (78 aa)).

It belongs to the NAD-dependent DNA ligase family. LigA subfamily. Requires Mg(2+) as cofactor. The cofactor is Mn(2+).

The enzyme catalyses NAD(+) + (deoxyribonucleotide)n-3'-hydroxyl + 5'-phospho-(deoxyribonucleotide)m = (deoxyribonucleotide)n+m + AMP + beta-nicotinamide D-nucleotide.. In terms of biological role, DNA ligase that catalyzes the formation of phosphodiester linkages between 5'-phosphoryl and 3'-hydroxyl groups in double-stranded DNA using NAD as a coenzyme and as the energy source for the reaction. It is essential for DNA replication and repair of damaged DNA. This chain is DNA ligase, found in Vibrio cholerae serotype O1 (strain ATCC 39541 / Classical Ogawa 395 / O395).